The following is a 496-amino-acid chain: MLQTSIKKIHGKLKGSNLNTAEVIVNSFKRAEQVLELNSFISMNNNAGLQVESSNEYFKNGKPRSLLEGIPIAVKDNFCVKDTLTTCGSKMLQNFRPKYTATVVQKLLDSGAILVGKTNMDEFAMGSGTTTSIFGPTKNIWGSRFSNLCIQEKNDWFIPGGSSGGSAVAVASGICLGALGSDTGGSCRNPASYCGIVGLKPTYGLLSRYGLIPLVNSMDVPAIMALNVEDTACLLGIMMGRDENDSTTVSKNLNLALNYSSSSVKGLKIGIPAEYNCQGLSDEIRSAWNDIAKVLYQGGASIVPVSMPHTKYSIVCYSILNQCEVASNMARYDGIEFGLRSKEKGNRKNSYVTTRYSGFNEVVRSRIIAGNFFLLSSNSNKYYEKALKVRRLIADDFNNAWRKGINILLTPTTLTDAPKYSEYIKKDEREQSAIQDYCTQPANMAGCPAISIPIELSKKGFPISLQLMAPKFEEKTLLGCALYIENAVNFKNMNEQ.

Residues Lys-75 and Ser-162 each act as charge relay system in the active site. The active-site Acyl-ester intermediate is the Ser-186.

The protein belongs to the amidase family. GatA subfamily. Subunit of the heterotrimeric GatCAB amidotransferase (AdT) complex, composed of A, B and C subunits.

The protein resides in the mitochondrion. It carries out the reaction L-glutamyl-tRNA(Gln) + L-glutamine + ATP + H2O = L-glutaminyl-tRNA(Gln) + L-glutamate + ADP + phosphate + H(+). In terms of biological role, allows the formation of correctly charged Gln-tRNA(Gln) through the transamidation of misacylated Glu-tRNA(Gln) in the mitochondria. The reaction takes place in the presence of glutamine and ATP through an activated gamma-phospho-Glu-tRNA(Gln). In Pediculus humanus subsp. corporis (Body louse), this protein is Glutamyl-tRNA(Gln) amidotransferase subunit A, mitochondrial.